The following is a 163-amino-acid chain: MRIEKCYFCSGPIYPGHGMMFVRNDCKVFRFCKSKCHKNFKKRRNPRKVRWTKAFRKAAGKELTVDNSFEFEKRRNEPIKYQRELWNKTIDAMKRVEEIKQKRQAKFIMNRLKKNKELQKVQDIKEVKQNIHLIRAPLAGKGKQLEEKMVQQLQEDVDMEDAP.

Belongs to the eukaryotic ribosomal protein eL24 family. As to quaternary structure, associated with nucleolar and cytoplasmic pre-60S particles. At the end of biogenesis it dissociates from cytoplasmic pre-60S particles and is likely to be exchanged for its ribosomal homolog, RPL24.

The protein resides in the nucleus. The protein localises to the nucleolus. In terms of biological role, involved in the biogenesis of the 60S ribosomal subunit. Ensures the docking of GTPBP4/NOG1 to pre-60S particles. The polypeptide is Probable ribosome biogenesis protein RLP24 (RSL24D1) (Pongo abelii (Sumatran orangutan)).